The primary structure comprises 292 residues: NAD kinase (292 aa).

Aspartate 73 (proton acceptor) is an active-site residue. NAD(+)-binding positions include 73–74 (DG), 147–148 (NE), histidine 158, arginine 175, aspartate 177, 188–193 (TAYSLS), and glutamine 247.

This sequence belongs to the NAD kinase family. A divalent metal cation is required as a cofactor.

The protein localises to the cytoplasm. The catalysed reaction is NAD(+) + ATP = ADP + NADP(+) + H(+). Its function is as follows. Involved in the regulation of the intracellular balance of NAD and NADP, and is a key enzyme in the biosynthesis of NADP. Catalyzes specifically the phosphorylation on 2'-hydroxyl of the adenosine moiety of NAD to yield NADP. This Shigella boydii serotype 18 (strain CDC 3083-94 / BS512) protein is NAD kinase.